The sequence spans 481 residues: MIKIETVLDILKKDGLFREIIDQGHYHYNYSKVIFDSISYDSRKVTEDTLFFAKGAAFKKEYLLSAITQGLAWYVAEKDYEVDIPVIIVNDIKKAMSLIAMEFYGNPQEKLKLLAFTGTKGKTTATYFAYNILSQGHRPAMLSTMNTTLDGETFFKSALTTPESIDLFDMMNQAVQNDRTHLIMEVSSQAYLVHRVYGLTFDVGVFLNITPDHIGPIEHPSFEDYFYHKRLLMENSRAVIINSDMDHFSVLKEQVEDQDHDFYGSQFDNQIENSKAFSFSATGKLAGDYDIQLIGNFNQENAVAAGLACLRLGASLEDIKKGIAATRVPGRMEVLTQKNGAKVFIDYAHNGDSLKKLINVVETHQTGKIALVLGSTGNKGESRRKDFGLLLNQHPEIQVFLTADDPNYEDPMAIADEISSYINHPVEKIADRQEAIKAAMAITNHELDAVIIAGKGADCYQIIQGKKESYPGDTAVAENYL.

Residue serine 42 coordinates UDP-N-acetyl-alpha-D-muramoyl-L-alanyl-D-glutamate. ATP is bound at residue 118-124 (GTKGKTT). Residues 160 to 161 (TT), serine 187, and arginine 195 each bind UDP-N-acetyl-alpha-D-muramoyl-L-alanyl-D-glutamate. An N6-carboxylysine modification is found at lysine 229. The L-lysine recognition motif motif lies at 404-407 (DDPN).

This sequence belongs to the MurCDEF family. MurE subfamily. Carboxylation is probably crucial for Mg(2+) binding and, consequently, for the gamma-phosphate positioning of ATP.

The protein localises to the cytoplasm. It carries out the reaction UDP-N-acetyl-alpha-D-muramoyl-L-alanyl-D-glutamate + L-lysine + ATP = UDP-N-acetyl-alpha-D-muramoyl-L-alanyl-gamma-D-glutamyl-L-lysine + ADP + phosphate + H(+). It functions in the pathway cell wall biogenesis; peptidoglycan biosynthesis. Its function is as follows. Catalyzes the addition of L-lysine to the nucleotide precursor UDP-N-acetylmuramoyl-L-alanyl-D-glutamate (UMAG) in the biosynthesis of bacterial cell-wall peptidoglycan. The sequence is that of UDP-N-acetylmuramoyl-L-alanyl-D-glutamate--L-lysine ligase from Streptococcus pneumoniae (strain ATCC BAA-255 / R6).